The chain runs to 424 residues: Glutamyl-tRNA(Gln) amidotransferase subunit D (424 aa).

Residues 56–78 (GETANGSRNGGKGCKTNEEELPE) are disordered. Residues 84–413 (PKIAILSTGG…EKAAGMLRED (330 aa)) enclose the Asparaginase/glutaminase domain. Active-site residues include Thr-94, Thr-170, Asp-171, and Lys-247.

Belongs to the asparaginase 1 family. GatD subfamily. Heterodimer of GatD and GatE.

It carries out the reaction L-glutamyl-tRNA(Gln) + L-glutamine + ATP + H2O = L-glutaminyl-tRNA(Gln) + L-glutamate + ADP + phosphate + H(+). Functionally, allows the formation of correctly charged Gln-tRNA(Gln) through the transamidation of misacylated Glu-tRNA(Gln) in organisms which lack glutaminyl-tRNA synthetase. The reaction takes place in the presence of glutamine and ATP through an activated gamma-phospho-Glu-tRNA(Gln). The GatDE system is specific for glutamate and does not act on aspartate. The chain is Glutamyl-tRNA(Gln) amidotransferase subunit D from Methanosarcina acetivorans (strain ATCC 35395 / DSM 2834 / JCM 12185 / C2A).